The sequence spans 330 residues: Putative heme-binding peroxidase (330 aa).

Residue histidine 38 is the Proton acceptor of the active site. Histidine 162 lines the heme b pocket. Tryptophan 178 serves as the catalytic Tryptophan radical intermediate. Residues glycine 286 to leucine 330 form a disordered region.

Belongs to the peroxidase family. Cytochrome c peroxidase subfamily. It depends on heme b as a cofactor.

In terms of biological role, destroys radicals which are normally produced within the cells and which are toxic to biological systems. This Mycosarcoma maydis (Corn smut fungus) protein is Putative heme-binding peroxidase (CCP2).